A 107-amino-acid polypeptide reads, in one-letter code: MTTEIKKLDPDTAIDIAYDIFLEMAGENLDPADILLFNLQFEERGGVEFVETADDWEEEIGVLIDQEEYAEVWVGLVNEQDEMDDVFAKFLISHREEDREFHVIWKK.

Belongs to the putative dsDNA mimic protein family.

In terms of biological role, may act as a double-stranded DNA (dsDNA) mimic. Probably regulates the activity of a dsDNA-binding protein. The chain is Putative double-stranded DNA mimic protein CGSHiGG_01135 from Haemophilus influenzae (strain PittGG).